Reading from the N-terminus, the 402-residue chain is Imidazolonepropionase (402 aa).

Fe(3+) is bound by residues His-69 and His-71. Positions 69 and 71 each coordinate Zn(2+). 3 residues coordinate 4-imidazolone-5-propanoate: Arg-78, Tyr-141, and His-174. Position 141 (Tyr-141) interacts with N-formimidoyl-L-glutamate. Position 239 (His-239) interacts with Fe(3+). His-239 is a binding site for Zn(2+). Gln-242 serves as a coordination point for 4-imidazolone-5-propanoate. Asp-314 is a binding site for Fe(3+). Asp-314 contributes to the Zn(2+) binding site. N-formimidoyl-L-glutamate contacts are provided by Asn-316 and Gly-318. A 4-imidazolone-5-propanoate-binding site is contributed by Thr-319.

The protein belongs to the metallo-dependent hydrolases superfamily. HutI family. Zn(2+) is required as a cofactor. Fe(3+) serves as cofactor.

Its subcellular location is the cytoplasm. It catalyses the reaction 4-imidazolone-5-propanoate + H2O = N-formimidoyl-L-glutamate. Its pathway is amino-acid degradation; L-histidine degradation into L-glutamate; N-formimidoyl-L-glutamate from L-histidine: step 3/3. In terms of biological role, catalyzes the hydrolytic cleavage of the carbon-nitrogen bond in imidazolone-5-propanoate to yield N-formimidoyl-L-glutamate. It is the third step in the universal histidine degradation pathway. The chain is Imidazolonepropionase from Maricaulis maris (strain MCS10) (Caulobacter maris).